A 98-amino-acid polypeptide reads, in one-letter code: uncharacterized protein (98 aa).

Low complexity predominate over residues 1 to 21 (MTTSPTTISTTTAATTTTTTP). Positions 1-26 (MTTSPTTISTTTAATTTTTTPGKGTD) are disordered. A helical transmembrane segment spans residues 29 to 49 (MVYIEAMLFSMLVLILLIIVC).

It is found in the host membrane. This is an uncharacterized protein from Equine herpesvirus 2 (strain 86/87) (EHV-2).